The following is a 248-amino-acid chain: Adenosylcobinamide-GDP ribazoletransferase (248 aa).

Helical transmembrane passes span 24–44 (EVNLKKGSALLPFVGLIIGAW), 47–67 (LVFTLVALVMPLPVAIIAGLF), 70–90 (IIITGGFHVDALADTADGLFS), 106–126 (VGANGVIAICFYFLFYGALFL), 134–154 (IGWLFFVLPIVAKGVTMLLFA), 165–185 (LGSIFLGVPWWPIAISQLFVL), 186–206 (FILGLVFSYIGLLAYAGVILF), and 228–248 (AGGQMGQLVCLFCLVLVWGLI).

It belongs to the CobS family. Mg(2+) serves as cofactor.

It is found in the cell membrane. It carries out the reaction alpha-ribazole + adenosylcob(III)inamide-GDP = adenosylcob(III)alamin + GMP + H(+). It catalyses the reaction alpha-ribazole 5'-phosphate + adenosylcob(III)inamide-GDP = adenosylcob(III)alamin 5'-phosphate + GMP + H(+). The protein operates within cofactor biosynthesis; adenosylcobalamin biosynthesis; adenosylcobalamin from cob(II)yrinate a,c-diamide: step 7/7. In terms of biological role, joins adenosylcobinamide-GDP and alpha-ribazole to generate adenosylcobalamin (Ado-cobalamin). Also synthesizes adenosylcobalamin 5'-phosphate from adenosylcobinamide-GDP and alpha-ribazole 5'-phosphate. The protein is Adenosylcobinamide-GDP ribazoletransferase of Listeria welshimeri serovar 6b (strain ATCC 35897 / DSM 20650 / CCUG 15529 / CIP 8149 / NCTC 11857 / SLCC 5334 / V8).